A 338-amino-acid chain; its full sequence is uncharacterized protein (338 aa).

Positions 1 to 29 are cleaved as a signal peptide; it reads MIKQLYKNITICSLTISTALTVFPATSYA.

This sequence belongs to the aerolysin family.

This is an uncharacterized protein from Staphylococcus aureus (strain bovine RF122 / ET3-1).